A 946-amino-acid polypeptide reads, in one-letter code: Ent-kaur-16-ene synthase (946 aa).

The Mg(2+) site is built by D656, E660, N839, D840, S843, and D847. Positions D656–E660 match the DEXXE motif motif.

Belongs to the terpene synthase family. It depends on Mg(2+) as a cofactor.

It carries out the reaction ent-copalyl diphosphate = ent-kaur-16-ene + diphosphate. The enzyme catalyses (2E,6E,10E)-geranylgeranyl diphosphate = ent-copalyl diphosphate. Its pathway is plant hormone biosynthesis; gibberellin biosynthesis. Its function is as follows. Catalyzes the conversion of geranylgeranyl diphosphate to the gibberellin precursor ent-kaurene diphosphate in a two step process. The chain is Ent-kaur-16-ene synthase from Phaeosphaeria sp. (strain L487).